The chain runs to 136 residues: Large ribosomal subunit protein uL16c (136 aa).

Belongs to the universal ribosomal protein uL16 family. In terms of assembly, part of the 50S ribosomal subunit.

It is found in the plastid. The protein resides in the chloroplast. The polypeptide is Large ribosomal subunit protein uL16c (Chlamydomonas sp. (strain WXM)).